A 178-amino-acid chain; its full sequence is Large ribosomal subunit protein uL6 (178 aa).

This sequence belongs to the universal ribosomal protein uL6 family. In terms of assembly, part of the 50S ribosomal subunit.

This protein binds to the 23S rRNA, and is important in its secondary structure. It is located near the subunit interface in the base of the L7/L12 stalk, and near the tRNA binding site of the peptidyltransferase center. The sequence is that of Large ribosomal subunit protein uL6 from Corynebacterium urealyticum (strain ATCC 43042 / DSM 7109).